We begin with the raw amino-acid sequence, 638 residues long: Mediator of RNA polymerase II transcription subunit 17 (638 aa).

A disordered region spans residues 1 to 21; that stretch reads MSDSFNLPLRPLTEKRERPDP.

This sequence belongs to the Mediator complex subunit 17 family. Component of the Mediator complex.

The protein resides in the nucleus. Its function is as follows. Component of the Mediator complex, a coactivator involved in the regulated transcription of nearly all RNA polymerase II-dependent genes. Mediator functions as a bridge to convey information from gene-specific regulatory proteins to the basal RNA polymerase II transcription machinery. Mediator is recruited to promoters by direct interactions with regulatory proteins and serves as a scaffold for the assembly of a functional preinitiation complex with RNA polymerase II and the general transcription factors. This Aspergillus oryzae (strain ATCC 42149 / RIB 40) (Yellow koji mold) protein is Mediator of RNA polymerase II transcription subunit 17 (srb4).